Consider the following 87-residue polypeptide: Small ribosomal subunit protein bS20 (87 aa).

Residues 1–11 (MANHKSALKRI) are compositionally biased toward basic residues. The disordered stretch occupies residues 1 to 23 (MANHKSALKRIKQTEKRTERNRH).

It belongs to the bacterial ribosomal protein bS20 family.

In terms of biological role, binds directly to 16S ribosomal RNA. This is Small ribosomal subunit protein bS20 from Geotalea daltonii (strain DSM 22248 / JCM 15807 / FRC-32) (Geobacter daltonii).